A 224-amino-acid chain; its full sequence is MIKLENDWDELLKDEFNQPYYLKLRQFLKNEYQTKRIFPDMYDIFNALKHTAYKDVKVVILGQDPYHGPGQAHGLSFSVQKGVQIPPSLQNIYLELHNDLNCEIPNNGYLIPWADQGVLLLNTVLTVRAGQANSHRGQGWELLTNRIIEMINQKEEPVVFLLWGNNAKEKLQLLTNPKHIAFTSVHPSPLSASRGFMGCKHFSKTNHFLEQNGIKPIDWQIPSI.

Asp64 (proton acceptor) is an active-site residue.

It belongs to the uracil-DNA glycosylase (UDG) superfamily. UNG family.

Its subcellular location is the cytoplasm. It carries out the reaction Hydrolyzes single-stranded DNA or mismatched double-stranded DNA and polynucleotides, releasing free uracil.. In terms of biological role, excises uracil residues from the DNA which can arise as a result of misincorporation of dUMP residues by DNA polymerase or due to deamination of cytosine. This is Uracil-DNA glycosylase 2 from Listeria innocua serovar 6a (strain ATCC BAA-680 / CLIP 11262).